A 1368-amino-acid polypeptide reads, in one-letter code: Mediator of RNA polymerase II transcription subunit 23 (1368 aa).

The interval 1343 to 1368 (VPPQAMNSGSPAPQSNQVPVSLPVTQ) is disordered. The span at 1347 to 1368 (AMNSGSPAPQSNQVPVSLPVTQ) shows a compositional bias: polar residues.

Belongs to the Mediator complex subunit 23 family. As to quaternary structure, interacts with ELK1. Component of the Mediator complex, which is composed of MED1, MED4, MED6, MED7, MED8, MED9, MED10, MED11, MED12, MED13, MED13L, MED14, MED15, MED16, MED17, MED18, MED19, MED20, MED21, MED22, MED23, MED24, MED25, MED26, MED27, MED29, MED30, MED31, CCNC, CDK8 and CDC2L6/CDK11. The MED12, MED13, CCNC and CDK8 subunits form a distinct module termed the CDK8 module. Mediator containing the CDK8 module is less active than Mediator lacking this module in supporting transcriptional activation. Individual preparations of the Mediator complex lacking one or more distinct subunits have been variously termed ARC, CRSP, DRIP, PC2, SMCC and TRAP. Interacts with CEBPB (when not methylated), CTNNB1, and GLI3. Interacts with the adenovirus E1A protein.

Its subcellular location is the nucleus. In terms of biological role, required for transcriptional activation subsequent to the assembly of the pre-initiation complex. Component of the Mediator complex, a coactivator involved in the regulated transcription of nearly all RNA polymerase II-dependent genes. Mediator functions as a bridge to convey information from gene-specific regulatory proteins to the basal RNA polymerase II transcription machinery. Mediator is recruited to promoters by direct interactions with regulatory proteins and serves as a scaffold for the assembly of a functional pre-initiation complex with RNA polymerase II and the general transcription factors. Required for transcriptional activation by adenovirus E1A protein. Required for ELK1-dependent transcriptional activation in response to activated Ras signaling. The sequence is that of Mediator of RNA polymerase II transcription subunit 23 (MED23) from Homo sapiens (Human).